We begin with the raw amino-acid sequence, 301 residues long: GTPase Era (301 aa).

Residues 7–175 (YCGFIAIVGR…AAIVRKHLPE (169 aa)) enclose the Era-type G domain. The segment at 15–22 (GRPNVGKS) is G1. 15–22 (GRPNVGKS) is a GTP binding site. The tract at residues 41 to 45 (QTTRH) is G2. The tract at residues 62–65 (DTPG) is G3. Residues 62–66 (DTPGL) and 124–127 (NKVD) contribute to the GTP site. The interval 124–127 (NKVD) is G4. The G5 stretch occupies residues 154–156 (ISA). A KH type-2 domain is found at 206-283 (LGAELPYSVT…HLELWVKVKS (78 aa)).

This sequence belongs to the TRAFAC class TrmE-Era-EngA-EngB-Septin-like GTPase superfamily. Era GTPase family. As to quaternary structure, monomer.

Its subcellular location is the cytoplasm. The protein resides in the cell inner membrane. In terms of biological role, an essential GTPase that binds both GDP and GTP, with rapid nucleotide exchange. Plays a role in 16S rRNA processing and 30S ribosomal subunit biogenesis and possibly also in cell cycle regulation and energy metabolism. The sequence is that of GTPase Era from Shigella dysenteriae serotype 1 (strain Sd197).